The chain runs to 121 residues: Large ribosomal subunit protein bL12 (121 aa).

The protein belongs to the bacterial ribosomal protein bL12 family. In terms of assembly, homodimer. Part of the ribosomal stalk of the 50S ribosomal subunit. Forms a multimeric L10(L12)X complex, where L10 forms an elongated spine to which 2 to 4 L12 dimers bind in a sequential fashion. Binds GTP-bound translation factors.

Forms part of the ribosomal stalk which helps the ribosome interact with GTP-bound translation factors. Is thus essential for accurate translation. This is Large ribosomal subunit protein bL12 from Shigella sonnei (strain Ss046).